The chain runs to 417 residues: D-amino acid dehydrogenase (417 aa).

3–17 (VVILGSGVVGVSTAW) contributes to the FAD binding site.

This sequence belongs to the DadA oxidoreductase family. Requires FAD as cofactor.

It carries out the reaction a D-alpha-amino acid + A + H2O = a 2-oxocarboxylate + AH2 + NH4(+). The protein operates within amino-acid degradation; D-alanine degradation; NH(3) and pyruvate from D-alanine: step 1/1. In terms of biological role, oxidative deamination of D-amino acids. In Pectobacterium atrosepticum (strain SCRI 1043 / ATCC BAA-672) (Erwinia carotovora subsp. atroseptica), this protein is D-amino acid dehydrogenase.